We begin with the raw amino-acid sequence, 280 residues long: Succinate dehydrogenase [ubiquinone] iron-sulfur subunit, mitochondrial (280 aa).

A mitochondrion-targeting transit peptide spans Met-1–Gly-28. One can recognise a 2Fe-2S ferredoxin-type domain in the interval Lys-40–Pro-131. Lys-51 and Lys-55 each carry N6-acetyllysine. 4 residues coordinate [2Fe-2S] cluster: Cys-93, Cys-98, Cys-101, and Cys-113. Positions Phe-146–Trp-218 are interaction with SDHAF1. One can recognise a 4Fe-4S ferredoxin-type domain in the interval Glu-176–Tyr-206. Residues Cys-186, Cys-189, and Cys-192 each contribute to the [4Fe-4S] cluster site. Cys-196 is a binding site for [3Fe-4S] cluster. Trp-201 contacts a ubiquinone. Residues Cys-243 and Cys-249 each coordinate [3Fe-4S] cluster. Cys-253 lines the [4Fe-4S] cluster pocket.

It belongs to the succinate dehydrogenase/fumarate reductase iron-sulfur protein family. In terms of assembly, component of complex II composed of four subunits: the flavoprotein (FP) SDHA, iron-sulfur protein (IP) SDHB, and a cytochrome b560 composed of SDHC and SDHD. Interacts with SDHAF1; the interaction is required for iron-sulfur cluster incorporation into SDHB. [2Fe-2S] cluster serves as cofactor. The cofactor is [3Fe-4S] cluster. [4Fe-4S] cluster is required as a cofactor.

It is found in the mitochondrion inner membrane. It carries out the reaction a quinone + succinate = fumarate + a quinol. The catalysed reaction is (R)-malate + a quinone = enol-oxaloacetate + a quinol. The enzyme catalyses (S)-malate + a quinone = enol-oxaloacetate + a quinol. It participates in carbohydrate metabolism; tricarboxylic acid cycle; fumarate from succinate (eukaryal route): step 1/1. Enol-oxaloacetate inhibits the succinate dehydrogenase activity. In terms of biological role, iron-sulfur protein (IP) subunit of the succinate dehydrogenase complex (mitochondrial respiratory chain complex II), responsible for transferring electrons from succinate to ubiquinone (coenzyme Q). SDH also oxidizes malate to the non-canonical enol form of oxaloacetate, enol-oxaloacetate. Enol-oxaloacetate, which is a potent inhibitor of the succinate dehydrogenase activity, is further isomerized into keto-oxaloacetate. The chain is Succinate dehydrogenase [ubiquinone] iron-sulfur subunit, mitochondrial (SDHB) from Sus scrofa (Pig).